The sequence spans 246 residues: tRNA (guanine-N(1)-)-methyltransferase (246 aa).

Residues Gly-113 and 133–138 (IGDFVM) each bind S-adenosyl-L-methionine.

It belongs to the RNA methyltransferase TrmD family. In terms of assembly, homodimer.

It localises to the cytoplasm. The enzyme catalyses guanosine(37) in tRNA + S-adenosyl-L-methionine = N(1)-methylguanosine(37) in tRNA + S-adenosyl-L-homocysteine + H(+). Functionally, specifically methylates guanosine-37 in various tRNAs. This chain is tRNA (guanine-N(1)-)-methyltransferase, found in Vibrio atlanticus (strain LGP32) (Vibrio splendidus (strain Mel32)).